The primary structure comprises 166 residues: Small ribosomal subunit protein uS5 (166 aa).

Residues Leu11–Val74 form the S5 DRBM domain.

The protein belongs to the universal ribosomal protein uS5 family. As to quaternary structure, part of the 30S ribosomal subunit. Contacts proteins S4 and S8.

Functionally, with S4 and S12 plays an important role in translational accuracy. In terms of biological role, located at the back of the 30S subunit body where it stabilizes the conformation of the head with respect to the body. This chain is Small ribosomal subunit protein uS5, found in Pasteurella multocida (strain Pm70).